The sequence spans 188 residues: Josephin-2 (188 aa).

Residues 11–188 (PPSVYHERQR…EEAGCWLNTS (178 aa)) enclose the Josephin domain. Cysteine 24 acts as the Nucleophile in catalysis. Histidine 125 functions as the Proton acceptor in the catalytic mechanism.

It localises to the cytoplasm. It is found in the cytosol. It catalyses the reaction Thiol-dependent hydrolysis of ester, thioester, amide, peptide and isopeptide bonds formed by the C-terminal Gly of ubiquitin (a 76-residue protein attached to proteins as an intracellular targeting signal).. In terms of biological role, cleaves 'Lys-63'-linked poly-ubiquitin chains, and with lesser efficiency 'Lys-48'-linked poly-ubiquitin chains (in vitro). May act as a deubiquitinating enzyme. In Mus musculus (Mouse), this protein is Josephin-2 (Josd2).